We begin with the raw amino-acid sequence, 794 residues long: Kinesin-like protein KIN-13A (794 aa).

One can recognise a Kinesin motor domain in the interval Lys193–Leu526. An ATP-binding site is contributed by Gly282–Thr289. The segment at Ser525 to Thr699 is disordered. Over residues Glu569–Ser579 the composition is skewed to basic and acidic residues. Polar residues-rich tracts occupy residues Asn580–Asn593 and Glu611–Glu632. Positions Gly650–Ser668 are enriched in basic and acidic residues. The span at Ser669–Gln696 shows a compositional bias: polar residues. A coiled-coil region spans residues Glu705 to Val742.

It belongs to the TRAFAC class myosin-kinesin ATPase superfamily. Kinesin family. KIN-13 subfamily. As to quaternary structure, component of the active ARAC10-IRC5-KIN13A complex. Interacts (via-C-terminus) with ICR2 and ICR5 (via N-terminus). No interactions with ICR1. Expressed in leaves, roots, young and mature seedlings. Preferentially expressed in the secondary cell wall pits of differentiating metaxylem vessel cells (at the protein level).

Its subcellular location is the golgi apparatus. It is found in the golgi stack. It localises to the cytoplasm. The protein resides in the cytoskeleton. Internal motor kinesin involved in trichome morphogenesis. Participates in regulating the formation of Golgi-associated vesicles. Plays a central role in microtubule disassembly via the active ARAC10-ICR5 cascade, which establishes the secondary cell wall pattern in metaxylem vessel cells. Acts redundantly with KIN13B to modulate cell wall synthesis and cell expansion via the THE1 pathway. This chain is Kinesin-like protein KIN-13A, found in Arabidopsis thaliana (Mouse-ear cress).